The primary structure comprises 262 residues: Nitrate transport protein NasD (262 aa).

The ABC transporter domain occupies 5 to 239 (IQVQGVSQRF…RPRNRVQLAD (235 aa)). An ATP-binding site is contributed by 41 to 48 (GHSGCGKS).

This sequence belongs to the ABC transporter superfamily.

Its subcellular location is the cell membrane. Its function is as follows. Probably part of a high-affinity binding-protein-dependent transport system for nitrate. Probably responsible for energy coupling to the transport system. This Klebsiella oxytoca protein is Nitrate transport protein NasD (nasD).